Reading from the N-terminus, the 259-residue chain is Histidinol-phosphatase (259 aa).

Residues Glu66, Asp82, Ile84, Asp85, and Asp207 each contribute to the Mg(2+) site. Glu66 contacts substrate. Substrate contacts are provided by residues 84–87 and Asp207; that span reads IDGT.

The protein belongs to the inositol monophosphatase superfamily. It depends on Mg(2+) as a cofactor.

The enzyme catalyses L-histidinol phosphate + H2O = L-histidinol + phosphate. It participates in amino-acid biosynthesis; L-histidine biosynthesis; L-histidine from 5-phospho-alpha-D-ribose 1-diphosphate: step 8/9. Functionally, catalyzes the dephosphorylation of histidinol-phosphate to histidinol, the direct precursor of histidine. This chain is Histidinol-phosphatase (hisN), found in Chlorobaculum parvum (strain DSM 263 / NCIMB 8327) (Chlorobium vibrioforme subsp. thiosulfatophilum).